We begin with the raw amino-acid sequence, 818 residues long: G-type lectin S-receptor-like serine/threonine-protein kinase At1g67520 (818 aa).

A signal peptide spans 1–22; that stretch reads MCSNGIFVSLLTLSLLLGKSCS. Over 23–387 the chain is Extracellular; it reads ETDTLHQGQF…NENKKVAAWH (365 aa). The 126-residue stretch at 24–149 folds into the Bulb-type lectin domain; that stretch reads TDTLHQGQFL…DADGSMKRVL (126 aa). N-linked (GlcNAc...) asparagine glycosylation is found at Asn-123, Asn-199, and Asn-337. The PAN domain maps to 290 to 379; sequence CLAAGYVVRD…PRTIYIRGNE (90 aa). Cystine bridges form between Cys-330–Cys-353 and Cys-334–Cys-340. Residues 388–408 traverse the membrane as a helical segment; that stretch reads IVVATLFLMTPIIWFIIYLVL. At 409–818 the chain is on the cytoplasmic side; that stretch reads RKFNVKGRNC…SITITVLEAR (410 aa). A Protein kinase domain is found at 496 to 785; sequence FSDENKLGEG…ALSLPKEPAF (290 aa). Residues 502–510 and Lys-524 each bind ATP; that span reads LGEGGFGPV. Ser-530 is modified (phosphoserine). Positions 585 to 602 are caM-binding; that stretch reads LRKNVLDWTLRFRIMEGI. Residue Asp-621 is the Proton acceptor of the active site. A phosphoserine mark is found at Ser-625 and Ser-638. Thr-655 is subject to Phosphothreonine. Ser-699 and Ser-807 each carry phosphoserine. At Thr-813 the chain carries Phosphothreonine.

The protein belongs to the protein kinase superfamily. Ser/Thr protein kinase family.

It is found in the cell membrane. The enzyme catalyses L-seryl-[protein] + ATP = O-phospho-L-seryl-[protein] + ADP + H(+). The catalysed reaction is L-threonyl-[protein] + ATP = O-phospho-L-threonyl-[protein] + ADP + H(+). This chain is G-type lectin S-receptor-like serine/threonine-protein kinase At1g67520, found in Arabidopsis thaliana (Mouse-ear cress).